Reading from the N-terminus, the 540-residue chain is Putative cysteine ligase BshC (540 aa).

Residues 457 to 477 (EKNRAFIQGQIAFLKERMERE) adopt a coiled-coil conformation.

This sequence belongs to the BshC family.

In terms of biological role, involved in bacillithiol (BSH) biosynthesis. May catalyze the last step of the pathway, the addition of cysteine to glucosamine malate (GlcN-Mal) to generate BSH. The chain is Putative cysteine ligase BshC from Shouchella clausii (strain KSM-K16) (Alkalihalobacillus clausii).